The chain runs to 433 residues: Protein slt1 (433 aa).

Disordered regions lie at residues 159–184, 200–234, and 252–433; these read SPEE…SEYA, NAPE…EELS, and SNKR…DEDA. Polar residues-rich tracts occupy residues 172–184 and 215–228; these read DQQT…SEYA and TLPN…QASV. Phosphoserine occurs at positions 227, 229, and 269. Residues 343–353 show a composition bias toward basic and acidic residues; sequence IDTKAGEKLTD. The span at 385–421 shows a compositional bias: polar residues; it reads EGSNNHEQGSFNEPKSNVDSNDSASPKRPSSQASLRH. Phosphoserine occurs at positions 409, 415, and 418.

The sequence is that of Protein slt1 (slt1) from Schizosaccharomyces pombe (strain 972 / ATCC 24843) (Fission yeast).